A 320-amino-acid polypeptide reads, in one-letter code: 4-diphosphocytidyl-2-C-methyl-D-erythritol kinase (320 aa).

K20 is a catalytic residue. 112 to 122 contacts ATP; that stretch reads PVAGGMGGGSA. Residue D154 is part of the active site.

The protein belongs to the GHMP kinase family. IspE subfamily.

It carries out the reaction 4-CDP-2-C-methyl-D-erythritol + ATP = 4-CDP-2-C-methyl-D-erythritol 2-phosphate + ADP + H(+). Its pathway is isoprenoid biosynthesis; isopentenyl diphosphate biosynthesis via DXP pathway; isopentenyl diphosphate from 1-deoxy-D-xylulose 5-phosphate: step 3/6. Functionally, catalyzes the phosphorylation of the position 2 hydroxy group of 4-diphosphocytidyl-2C-methyl-D-erythritol. In Pseudarthrobacter chlorophenolicus (strain ATCC 700700 / DSM 12829 / CIP 107037 / JCM 12360 / KCTC 9906 / NCIMB 13794 / A6) (Arthrobacter chlorophenolicus), this protein is 4-diphosphocytidyl-2-C-methyl-D-erythritol kinase.